The sequence spans 305 residues: tRNA dimethylallyltransferase (305 aa).

8–15 is a binding site for ATP; that stretch reads GPTAIGKS. Position 10 to 15 (10 to 15) interacts with substrate; the sequence is TAIGKS. The tract at residues 33–36 is interaction with substrate tRNA; it reads DSMA.

This sequence belongs to the IPP transferase family. In terms of assembly, monomer. Requires Mg(2+) as cofactor.

It carries out the reaction adenosine(37) in tRNA + dimethylallyl diphosphate = N(6)-dimethylallyladenosine(37) in tRNA + diphosphate. Catalyzes the transfer of a dimethylallyl group onto the adenine at position 37 in tRNAs that read codons beginning with uridine, leading to the formation of N6-(dimethylallyl)adenosine (i(6)A). The sequence is that of tRNA dimethylallyltransferase from Aquifex aeolicus (strain VF5).